The primary structure comprises 195 residues: Nascent polypeptide-associated complex subunit alpha (195 aa).

2 disordered regions span residues 1-59 and 132-153; these read MTGS…SRSE and TREA…EEDS. Residues 7-16 are compositionally biased toward basic and acidic residues; it reads TRQKEVKEPQ. Over residues 19–33 the composition is skewed to acidic residues; that stretch reads VSDDSDNEAVEQELT. Basic and acidic residues predominate over residues 47 to 59; that stretch reads DHIDKQAKQSRSE. The NAC-A/B domain occupies 56–121; that stretch reads SRSEKKARKL…AKIEDLTQHA (66 aa). The span at 142–153 shows a compositional bias: acidic residues; that stretch reads EEDENEDVEEDS.

This sequence belongs to the NAC-alpha family. May be part of the nascent polypeptide-associated complex (NAC), which is a heterodimer of icd-2 and icd-1 (via NAC-A/B domains).

It localises to the cytoplasm. Functionally, may prevent inappropriate targeting of non-secretory polypeptides to the endoplasmic reticulum (ER). Plays a role in the response to heat stress. This Caenorhabditis elegans protein is Nascent polypeptide-associated complex subunit alpha.